The sequence spans 460 residues: Cyclin-A1-1 (460 aa).

2 disordered regions span residues 1 to 52 and 95 to 126; these read MSNI…ITNQ and PHKV…KSPQ. 2 stretches are compositionally biased toward low complexity: residues 10–19 and 100–111; these read SSFSSSTKSS and SSPSKSDDGSVS.

The protein belongs to the cyclin family. Cyclin AB subfamily. As to quaternary structure, interacts with FZR2/CCS52A1, FZR1/CCS52A2 and FZR3/CCS52B.

The protein is Cyclin-A1-1 (CYCA1-1) of Arabidopsis thaliana (Mouse-ear cress).